A 756-amino-acid chain; its full sequence is Protein O-mannosyl-transferase 2 (756 aa).

7 helical membrane passes run 64 to 84, 110 to 130, 156 to 176, 179 to 199, 203 to 223, 245 to 265, and 293 to 313; these read AHVP…TRFY, TFFF…AGYL, AFCA…VLEL, SSTA…CITL, ILLD…MVKF, CLSG…LVGI, and VFGL…IHFI. 3 MIR domains span residues 344–400, 410–466, and 471–528; these read PEYL…VKRL, PELV…VEVC, and GDPV…IEDH. The next 4 membrane-spanning stretches (helical) occupy residues 602–622, 643–663, 672–692, and 713–733; these read PVIW…LTVA, LMEG…PFYI, HYFP…DILL, and SVLL…SYGM.

It belongs to the glycosyltransferase 39 family. Widely expressed. Has particularly strong expression in ovary, testis, liver, brain, muscle, heart and eye.

It localises to the endoplasmic reticulum membrane. The catalysed reaction is a di-trans,poly-cis-dolichyl beta-D-mannosyl phosphate + L-seryl-[protein] = 3-O-(alpha-D-mannosyl)-L-seryl-[protein] + a di-trans,poly-cis-dolichyl phosphate + H(+). It carries out the reaction a di-trans,poly-cis-dolichyl beta-D-mannosyl phosphate + L-threonyl-[protein] = 3-O-(alpha-D-mannosyl)-L-threonyl-[protein] + a di-trans,poly-cis-dolichyl phosphate + H(+). The protein operates within protein modification; protein glycosylation. Transfers mannosyl residues to the hydroxyl group of serine or threonine residues. Coexpression of both POMT1 and POMT2 is necessary for enzyme activity, expression of either POMT1 or POMT2 alone is insufficient. This Danio rerio (Zebrafish) protein is Protein O-mannosyl-transferase 2.